We begin with the raw amino-acid sequence, 173 residues long: 3-isopropylmalate dehydratase small subunit (173 aa).

Belongs to the LeuD family. LeuD type 2 subfamily. In terms of assembly, heterodimer of LeuC and LeuD.

It carries out the reaction (2R,3S)-3-isopropylmalate = (2S)-2-isopropylmalate. The protein operates within amino-acid biosynthesis; L-leucine biosynthesis; L-leucine from 3-methyl-2-oxobutanoate: step 2/4. Functionally, catalyzes the isomerization between 2-isopropylmalate and 3-isopropylmalate, via the formation of 2-isopropylmaleate. The polypeptide is 3-isopropylmalate dehydratase small subunit (Caldicellulosiruptor saccharolyticus (strain ATCC 43494 / DSM 8903 / Tp8T 6331)).